We begin with the raw amino-acid sequence, 257 residues long: Thiazole synthase (257 aa).

Lysine 98 functions as the Schiff-base intermediate with DXP in the catalytic mechanism. Residues glycine 159, 185-186 (AG), and 207-208 (NT) contribute to the 1-deoxy-D-xylulose 5-phosphate site.

The protein belongs to the ThiG family. As to quaternary structure, homotetramer. Forms heterodimers with either ThiH or ThiS.

Its subcellular location is the cytoplasm. It catalyses the reaction [ThiS sulfur-carrier protein]-C-terminal-Gly-aminoethanethioate + 2-iminoacetate + 1-deoxy-D-xylulose 5-phosphate = [ThiS sulfur-carrier protein]-C-terminal Gly-Gly + 2-[(2R,5Z)-2-carboxy-4-methylthiazol-5(2H)-ylidene]ethyl phosphate + 2 H2O + H(+). The protein operates within cofactor biosynthesis; thiamine diphosphate biosynthesis. In terms of biological role, catalyzes the rearrangement of 1-deoxy-D-xylulose 5-phosphate (DXP) to produce the thiazole phosphate moiety of thiamine. Sulfur is provided by the thiocarboxylate moiety of the carrier protein ThiS. In vitro, sulfur can be provided by H(2)S. This is Thiazole synthase from Anaeromyxobacter sp. (strain Fw109-5).